A 507-amino-acid chain; its full sequence is Probable cytosol aminopeptidase (507 aa).

Lys275 and Asp280 together coordinate Mn(2+). Residue Lys287 is part of the active site. 3 residues coordinate Mn(2+): Asp298, Asp357, and Glu359. The active site involves Arg361.

It belongs to the peptidase M17 family. It depends on Mn(2+) as a cofactor.

Its subcellular location is the cytoplasm. It carries out the reaction Release of an N-terminal amino acid, Xaa-|-Yaa-, in which Xaa is preferably Leu, but may be other amino acids including Pro although not Arg or Lys, and Yaa may be Pro. Amino acid amides and methyl esters are also readily hydrolyzed, but rates on arylamides are exceedingly low.. The catalysed reaction is Release of an N-terminal amino acid, preferentially leucine, but not glutamic or aspartic acids.. In terms of biological role, presumably involved in the processing and regular turnover of intracellular proteins. Catalyzes the removal of unsubstituted N-terminal amino acids from various peptides. The polypeptide is Probable cytosol aminopeptidase (Acidobacterium capsulatum (strain ATCC 51196 / DSM 11244 / BCRC 80197 / JCM 7670 / NBRC 15755 / NCIMB 13165 / 161)).